The sequence spans 350 residues: Putative ATP-binding protein BRA0745/BS1330_II0738 (350 aa).

Positions 4 to 234 constitute an ABC transporter domain; sequence VSLRGISKTF…PANKFVAGFI (231 aa). 36 to 43 provides a ligand contact to ATP; that stretch reads GPSGCGKS.

Belongs to the ABC transporter superfamily. As to quaternary structure, the complex is composed of two ATP-binding proteins (BRA0745), two transmembrane proteins (BRA0749) and a solute-binding protein (BRA0748).

It localises to the cell inner membrane. Probably part of an ABC transporter complex. Probably responsible for energy coupling to the transport system. This is Putative ATP-binding protein BRA0745/BS1330_II0738 from Brucella suis biovar 1 (strain 1330).